The chain runs to 94 residues: Cytochrome b-c1 complex subunit 8, mitochondrial (94 aa).

Over 2–49 (GPPSGKTYMGWWGHMGGPKQKGITSYAVSPYAQKPLQGIFHNAVFNSF) the chain is Mitochondrial matrix. Residues 50–80 (RRFKSQFLYVLIPAGIYWYWWKNGNEYNEFL) form a helical membrane-spanning segment. The Mitochondrial intermembrane portion of the chain corresponds to 81-94 (YSKAGREELERVNV).

This sequence belongs to the UQCRQ/QCR8 family. As to quaternary structure, component of the ubiquinol-cytochrome c oxidoreductase (cytochrome b-c1 complex, complex III, CIII), a multisubunit enzyme composed of 10 subunits. The complex is composed of 3 respiratory subunits cytochrome b (COB), cytochrome c1 (CYT1) and Rieske protein (RIP1), 2 core protein subunits COR1 and QCR2, and 5 low-molecular weight protein subunits QCR6, QCR7, QCR8, QCR9 and QCR10. The complex exists as an obligatory dimer and forms supercomplexes (SCs) in the inner mitochondrial membrane with a monomer or a dimer of cytochrome c oxidase (complex IV, CIV), resulting in 2 different assemblies (supercomplexes III(2)IV and III(2)IV(2)).

The protein resides in the mitochondrion inner membrane. Functionally, component of the ubiquinol-cytochrome c oxidoreductase, a multisubunit transmembrane complex that is part of the mitochondrial electron transport chain which drives oxidative phosphorylation. The respiratory chain contains 3 multisubunit complexes succinate dehydrogenase (complex II, CII), ubiquinol-cytochrome c oxidoreductase (cytochrome b-c1 complex, complex III, CIII) and cytochrome c oxidase (complex IV, CIV), that cooperate to transfer electrons derived from NADH and succinate to molecular oxygen, creating an electrochemical gradient over the inner membrane that drives transmembrane transport and the ATP synthase. The cytochrome b-c1 complex catalyzes electron transfer from ubiquinol to cytochrome c, linking this redox reaction to translocation of protons across the mitochondrial inner membrane, with protons being carried across the membrane as hydrogens on the quinol. In the process called Q cycle, 2 protons are consumed from the matrix, 4 protons are released into the intermembrane space and 2 electrons are passed to cytochrome c. The polypeptide is Cytochrome b-c1 complex subunit 8, mitochondrial (QCR8) (Saccharomyces cerevisiae (strain ATCC 204508 / S288c) (Baker's yeast)).